The chain runs to 351 residues: ATP-dependent 6-phosphofructokinase subunit gamma (351 aa).

As to quaternary structure, heterododecamer of 4 alpha, 4 beta and 4 gamma chains. The gamma chain bridges the N-terminal halves of the alpha and beta subunits.

The protein resides in the cytoplasm. The protein operates within carbohydrate degradation; glycolysis; D-glyceraldehyde 3-phosphate and glycerone phosphate from D-glucose: step 3/4. In terms of biological role, structural subunit of pyrophosphate--fructose 6-phosphate 1-phosphotransferase. Not required for catalytic activity. Fine-tunes allosteric regulation of the ATP-PFK by ATP, fructose 2,6-bisphosphate and AMP. In Komagataella phaffii (strain GS115 / ATCC 20864) (Yeast), this protein is ATP-dependent 6-phosphofructokinase subunit gamma (PFK3).